Consider the following 419-residue polypeptide: Effector protein BipC (419 aa).

Disordered stretches follow at residues 62-91 (VAGSGAQRVELARPKPDAQTRATDRRTVSG) and 338-402 (LQSG…AKSQ). Basic and acidic residues-rich tracts occupy residues 71–91 (ELARPKPDAQTRATDRRTVSG) and 380–392 (TRDEAAHRSREAA).

It belongs to the SctB/SipC family.

It is found in the secreted. In Burkholderia mallei (strain NCTC 10247), this protein is Effector protein BipC (bipC).